Consider the following 253-residue polypeptide: DNA repair protein RecO (253 aa).

This sequence belongs to the RecO family.

In terms of biological role, involved in DNA repair and RecF pathway recombination. This chain is DNA repair protein RecO, found in Staphylococcus epidermidis (strain ATCC 35984 / DSM 28319 / BCRC 17069 / CCUG 31568 / BM 3577 / RP62A).